Here is a 450-residue protein sequence, read N- to C-terminus: Guanine deaminase (450 aa).

Positions 88 and 90 each coordinate Zn(2+). Residues 90–93 (HAPQ), 218–219 (RF), 245–248 (HLSE), and Asp335 each bind substrate. Positions 245 and 335 each coordinate Zn(2+).

This sequence belongs to the metallo-dependent hydrolases superfamily. ATZ/TRZ family. Zn(2+) is required as a cofactor.

The catalysed reaction is guanine + H2O + H(+) = xanthine + NH4(+). The protein operates within purine metabolism; guanine degradation; xanthine from guanine: step 1/1. Its function is as follows. Catalyzes the hydrolytic deamination of guanine, producing xanthine and ammonia. This Dictyostelium discoideum (Social amoeba) protein is Guanine deaminase (guaD).